An 853-amino-acid chain; its full sequence is Leucine-rich repeat and death domain-containing protein 1 (853 aa).

The tract at residues 1–78 (MSEDGSNVEP…EEKNTGIPFS (78 aa)) is disordered. Over residues 19 to 31 (LEEPGSEISDLLD) the composition is skewed to acidic residues. The span at 56 to 65 (QSAASFTSQL) shows a compositional bias: polar residues. LRR repeat units lie at residues 133–157 (MKSD…IVKV), 159–180 (YVKY…DPGD), 183–204 (GLEI…IQLF), 206–227 (NLKI…LLQL), 229–251 (NMRQ…EHLR), 252–274 (YLET…SSLK), 275–297 (NLRI…CFLP), 298–319 (KLNS…VREL), 321–342 (NLES…IFQL), 344–365 (KIKE…IENF), 367–388 (ELRL…ISHC), 390–411 (NLES…IRKL), 413–435 (NLRQ…SHLS), 436–457 (NIHI…IKNC), 459–481 (KITR…CALQ), 482–503 (SLDY…MSFS), 505–527 (QLLH…CSLT), 528–549 (NLEY…ISAM), 551–573 (SLHV…CSLK), 574–596 (NLRV…SKLK), 597–618 (RIQK…LCQL), 620–641 (TLEE…PEEV), 646–668 (QLKI…GELR), 669–690 (SLVS…FLSL), 692–713 (VLQS…IYKL), and 715–736 (SLKE…ICKG). In terms of domain architecture, Death spans 757–845 (LEKIFNIVAN…DIMDKITALN (89 aa)).

In Mus musculus (Mouse), this protein is Leucine-rich repeat and death domain-containing protein 1 (Lrrd1).